Consider the following 311-residue polypeptide: 4-hydroxy-tetrahydrodipicolinate synthase (311 aa).

T49 provides a ligand contact to pyruvate. Y138 (proton donor/acceptor) is an active-site residue. Residue K166 is the Schiff-base intermediate with substrate of the active site. I207 lines the pyruvate pocket.

Belongs to the DapA family. Homotetramer; dimer of dimers.

Its subcellular location is the cytoplasm. The catalysed reaction is L-aspartate 4-semialdehyde + pyruvate = (2S,4S)-4-hydroxy-2,3,4,5-tetrahydrodipicolinate + H2O + H(+). It functions in the pathway amino-acid biosynthesis; L-lysine biosynthesis via DAP pathway; (S)-tetrahydrodipicolinate from L-aspartate: step 3/4. Catalyzes the condensation of (S)-aspartate-beta-semialdehyde [(S)-ASA] and pyruvate to 4-hydroxy-tetrahydrodipicolinate (HTPA). This is 4-hydroxy-tetrahydrodipicolinate synthase from Lactobacillus acidophilus (strain ATCC 700396 / NCK56 / N2 / NCFM).